The following is a 409-amino-acid chain: Arginine biosynthesis bifunctional protein ArgJ (409 aa).

Residues Thr157, Lys183, Thr194, Glu281, Asn404, and Ser409 each contribute to the substrate site. The active-site Nucleophile is Thr194.

This sequence belongs to the ArgJ family. Heterotetramer of two alpha and two beta chains.

Its subcellular location is the cytoplasm. The enzyme catalyses N(2)-acetyl-L-ornithine + L-glutamate = N-acetyl-L-glutamate + L-ornithine. The catalysed reaction is L-glutamate + acetyl-CoA = N-acetyl-L-glutamate + CoA + H(+). The protein operates within amino-acid biosynthesis; L-arginine biosynthesis; L-ornithine and N-acetyl-L-glutamate from L-glutamate and N(2)-acetyl-L-ornithine (cyclic): step 1/1. It functions in the pathway amino-acid biosynthesis; L-arginine biosynthesis; N(2)-acetyl-L-ornithine from L-glutamate: step 1/4. Catalyzes two activities which are involved in the cyclic version of arginine biosynthesis: the synthesis of N-acetylglutamate from glutamate and acetyl-CoA as the acetyl donor, and of ornithine by transacetylation between N(2)-acetylornithine and glutamate. This chain is Arginine biosynthesis bifunctional protein ArgJ, found in Zymomonas mobilis subsp. mobilis (strain ATCC 31821 / ZM4 / CP4).